The chain runs to 325 residues: Cytochrome f (325 aa).

A signal peptide spans 1–40 (MKTPELMAIWQRLKTACLVAIATFGLFFASDVLFPQAAAA). Residues Tyr41, Cys62, Cys65, and His66 each contribute to the heme site. The chain crosses the membrane as a helical span at residues 290–309 (IYGYMAFVAGIMLTQIFLVL).

Belongs to the cytochrome f family. The 4 large subunits of the cytochrome b6-f complex are cytochrome b6, subunit IV (17 kDa polypeptide, PetD), cytochrome f and the Rieske protein, while the 4 small subunits are PetG, PetL, PetM and PetN. The complex functions as a dimer. Heme serves as cofactor.

It is found in the cellular thylakoid membrane. Component of the cytochrome b6-f complex, which mediates electron transfer between photosystem II (PSII) and photosystem I (PSI), cyclic electron flow around PSI, and state transitions. This chain is Cytochrome f (petA), found in Picosynechococcus sp. (strain ATCC 27264 / PCC 7002 / PR-6) (Agmenellum quadruplicatum).